The sequence spans 361 residues: Probable dual-specificity RNA methyltransferase RlmN (361 aa).

Glutamate 91 acts as the Proton acceptor in catalysis. Residues 97–329 (QHYGLSVCVT…KKKGGNCVVR (233 aa)) enclose the Radical SAM core domain. Cysteine 104 and cysteine 340 are disulfide-bonded. The [4Fe-4S] cluster site is built by cysteine 111, cysteine 115, and cysteine 118. S-adenosyl-L-methionine-binding positions include 163 to 164 (GE), serine 195, 218 to 220 (SLH), and asparagine 296. Residue cysteine 340 is the S-methylcysteine intermediate of the active site.

It belongs to the radical SAM superfamily. RlmN family. [4Fe-4S] cluster is required as a cofactor.

The protein resides in the cytoplasm. It carries out the reaction adenosine(2503) in 23S rRNA + 2 reduced [2Fe-2S]-[ferredoxin] + 2 S-adenosyl-L-methionine = 2-methyladenosine(2503) in 23S rRNA + 5'-deoxyadenosine + L-methionine + 2 oxidized [2Fe-2S]-[ferredoxin] + S-adenosyl-L-homocysteine. The enzyme catalyses adenosine(37) in tRNA + 2 reduced [2Fe-2S]-[ferredoxin] + 2 S-adenosyl-L-methionine = 2-methyladenosine(37) in tRNA + 5'-deoxyadenosine + L-methionine + 2 oxidized [2Fe-2S]-[ferredoxin] + S-adenosyl-L-homocysteine. Functionally, specifically methylates position 2 of adenine 2503 in 23S rRNA and position 2 of adenine 37 in tRNAs. This chain is Probable dual-specificity RNA methyltransferase RlmN, found in Streptococcus pneumoniae (strain P1031).